Reading from the N-terminus, the 859-residue chain is Leucine--tRNA ligase (859 aa).

The 'HIGH' region motif lies at 42 to 52; the sequence is PYPSGRLHMGH. A 'KMSKS' region motif is present at residues 618 to 622; sequence KMSKS. Position 621 (Lys621) interacts with ATP.

Belongs to the class-I aminoacyl-tRNA synthetase family.

It localises to the cytoplasm. It catalyses the reaction tRNA(Leu) + L-leucine + ATP = L-leucyl-tRNA(Leu) + AMP + diphosphate. This chain is Leucine--tRNA ligase, found in Shewanella oneidensis (strain ATCC 700550 / JCM 31522 / CIP 106686 / LMG 19005 / NCIMB 14063 / MR-1).